Reading from the N-terminus, the 206-residue chain is Ribosomal RNA large subunit methyltransferase E (206 aa).

S-adenosyl-L-methionine-binding residues include glycine 60, tryptophan 62, aspartate 80, aspartate 96, and aspartate 121. The Proton acceptor role is filled by lysine 161.

Belongs to the class I-like SAM-binding methyltransferase superfamily. RNA methyltransferase RlmE family.

It localises to the cytoplasm. It catalyses the reaction uridine(2552) in 23S rRNA + S-adenosyl-L-methionine = 2'-O-methyluridine(2552) in 23S rRNA + S-adenosyl-L-homocysteine + H(+). Its function is as follows. Specifically methylates the uridine in position 2552 of 23S rRNA at the 2'-O position of the ribose in the fully assembled 50S ribosomal subunit. The polypeptide is Ribosomal RNA large subunit methyltransferase E (Nitrosomonas europaea (strain ATCC 19718 / CIP 103999 / KCTC 2705 / NBRC 14298)).